The following is a 118-amino-acid chain: Small ribosomal subunit protein uS13 (118 aa).

A disordered region spans residues 94–118; that stretch reads SLPLRGQRTKTNARTRKGPRKPIRK.

This sequence belongs to the universal ribosomal protein uS13 family. Part of the 30S ribosomal subunit. Forms a loose heterodimer with protein S19. Forms two bridges to the 50S subunit in the 70S ribosome.

Located at the top of the head of the 30S subunit, it contacts several helices of the 16S rRNA. In the 70S ribosome it contacts the 23S rRNA (bridge B1a) and protein L5 of the 50S subunit (bridge B1b), connecting the 2 subunits; these bridges are implicated in subunit movement. Contacts the tRNAs in the A and P-sites. In Shewanella baltica (strain OS223), this protein is Small ribosomal subunit protein uS13.